A 414-amino-acid polypeptide reads, in one-letter code: TAR DNA-binding protein 43 (414 aa).

Glycyl lysine isopeptide (Lys-Gly) (interchain with G-Cter in SUMO2) cross-links involve residues Lys-79, Lys-84, Lys-95, Lys-102, and Lys-181. RRM domains are found at residues 104-200 (SDLI…RCTE) and 191-262 (RKVF…NAEP). A Phosphoserine modification is found at Ser-183. Residues 216 to 414 (DVMDVFIPKP…MDSKSSGWGM (199 aa)) are interaction with UBQLN2. Positions 261–274 (EPKHNSNRQLERSG) are enriched in basic and acidic residues. 2 disordered regions span residues 261-303 (EPKH…GNNQ) and 341-373 (ASQQNQSGPSGNNQNQGNMQREPNQAFGSGNNS). Lys-263 participates in a covalent cross-link: Glycyl lysine isopeptide (Lys-Gly) (interchain with G-Cter in SUMO2). Gly residues predominate over residues 275 to 303 (RFGGNPGGFGNQGGFGNSRGGGAGLGNNQ). Phosphoserine is present on Ser-292. Omega-N-methylarginine is present on Arg-293. The segment covering 342-358 (SQQNQSGPSGNNQNQGN) has biased composition (low complexity).

In terms of assembly, monomer and component of the SFPQ-NONO complex, which is probably a heterotetramer of two 52 kDa (NONO) and two 100 kDa (SFPQ) subunits. NONO is a component of spliceosome and U5.4/6 snRNP complexes. Interacts with CPNE4 (via VWFA domain). Forms heterodimers with PSPC1; this involves formation of a coiled coil domain by helices from both proteins. Part of complex consisting of SFPQ, NONO and MATR3. Part of a complex consisting of SFPQ, NONO and NR5A1. Part of a complex consisting of SFPQ, NONO and TOP1. Interacts with SPI1. Interacts with RNF43. Interacts with PER1 and PER2. Part of the HDP-RNP complex composed of at least HEXIM1, PRKDC, XRCC5, XRCC6, paraspeckle proteins (SFPQ, NONO, PSPC1, RBM14, and MATR3) and NEAT1 RNA. Interacts (via second RRM domain) with WASL; the interaction is direct. Component of a multiprotein complex with WASL and SFPQ. Interacts with ERCC6. Interacts (via DNA-binding domain) with TET1. In terms of processing, hyperphosphorylated. Ubiquitinated.

The protein localises to the nucleus. It localises to the nucleolus. The protein resides in the nucleus speckle. Its subcellular location is the chromosome. It is found in the mitochondrion. DNA- and RNA binding protein, involved in several nuclear processes. Binds the conventional octamer sequence in double-stranded DNA. Also binds single-stranded DNA and RNA at a site independent of the duplex site. Involved in pre-mRNA splicing, probably as a heterodimer with SFPQ. Interacts with U5 snRNA, probably by binding to a purine-rich sequence located on the 3' side of U5 snRNA stem 1b. Together with PSPC1, required for the formation of nuclear paraspeckles. The SFPQ-NONO heteromer associated with MATR3 may play a role in nuclear retention of defective RNAs. The SFPQ-NONO heteromer may be involved in DNA unwinding by modulating the function of topoisomerase I/TOP1. The SFPQ-NONO heteromer may be involved in DNA non-homologous end joining (NHEJ) required for double-strand break repair and V(D)J recombination and may stabilize paired DNA ends. In vitro, the complex strongly stimulates DNA end joining, binds directly to the DNA substrates and cooperates with the Ku70/G22P1-Ku80/XRCC5 (Ku) dimer to establish a functional preligation complex. NONO is involved in transcriptional regulation. The SFPQ-NONO-NR5A1 complex binds to the CYP17 promoter and regulates basal and cAMP-dependent transcriptional activity. NONO binds to an enhancer element in long terminal repeats of endogenous intracisternal A particles (IAPs) and activates transcription. Regulates the circadian clock by repressing the transcriptional activator activity of the CLOCK-BMAL1 heterodimer. Important for the functional organization of GABAergic synapses. Plays a specific and important role in the regulation of synaptic RNAs and GPHN/gephyrin scaffold structure, through the regulation of GABRA2 transcript. Plays a key role during neuronal differentiation by recruiting TET1 to genomic loci and thereby regulating 5-hydroxymethylcytosine levels. Plays a role in the regulation of DNA virus-mediated innate immune response by assembling into the HDP-RNP complex, a complex that serves as a platform for IRF3 phosphorylation and subsequent innate immune response activation through the cGAS-STING pathway. In Pongo abelii (Sumatran orangutan), this protein is TAR DNA-binding protein 43 (TARDBP).